Here is a 130-residue protein sequence, read N- to C-terminus: MANQQYYGTGRRKTSAARVFMTPGNGNITVNGRPLDEYFGRETGRMIVRQALEQVDAGDKFDIKATVSGGGSSGQAGAVRHGIARALANYDAELKAPLRRAGFITRDARMVERKKIGLHKARRATQFSKR.

It belongs to the universal ribosomal protein uS9 family.

The sequence is that of Small ribosomal subunit protein uS9 from Halorhodospira halophila (strain DSM 244 / SL1) (Ectothiorhodospira halophila (strain DSM 244 / SL1)).